We begin with the raw amino-acid sequence, 139 residues long: Acidic phospholipase A2 H1E6 (139 aa).

A signal peptide spans 1-16; it reads MRTLWILAVLQVGVEG. Intrachain disulfides connect C42–C132, C44–C60, C59–C111, C65–C139, C66–C104, C73–C97, and C91–C102. Ca(2+) is bound by residues Y43, G45, and G47. H63 is a catalytic residue. Position 64 (D64) interacts with Ca(2+). The active site involves D105.

Homodimer. Ca(2+) is required as a cofactor. As to expression, expressed by the venom gland.

It is found in the secreted. It catalyses the reaction a 1,2-diacyl-sn-glycero-3-phosphocholine + H2O = a 1-acyl-sn-glycero-3-phosphocholine + a fatty acid + H(+). Snake venom phospholipase A2 (PLA2) that inhibits ADP-induced platelet aggregation. PLA2 catalyzes the calcium-dependent hydrolysis of the 2-acyl groups in 3-sn-phosphoglycerides. The polypeptide is Acidic phospholipase A2 H1E6 (Calloselasma rhodostoma (Malayan pit viper)).